Reading from the N-terminus, the 327-residue chain is Probable cytosolic iron-sulfur protein assembly protein CIAO1 homolog (327 aa).

7 WD repeats span residues 3-42, 48-87, 92-131, 137-176, 181-220, 239-278, and 290-327; these read GHED…WICK, GHQR…FECN, GHEN…EYEC, SHTQ…WSCC, GHES…NQEG, YHDR…DRNQ, and AHSM…PAEE.

The protein belongs to the WD repeat CIA1 family.

Essential component of the cytosolic iron-sulfur (Fe/S) protein assembly machinery. Required for the maturation of extramitochondrial Fe/S proteins. The sequence is that of Probable cytosolic iron-sulfur protein assembly protein CIAO1 homolog from Nematostella vectensis (Starlet sea anemone).